Here is a 463-residue protein sequence, read N- to C-terminus: Mitochondrial dynamics protein MIEF1 (463 aa).

Over 1-23 (MAGAGERKGKKDDNGIGTAIDFV) the chain is Mitochondrial intermembrane. Residues 24 to 46 (LSNARLVLGVGGAAMLGIATLAV) form a helical membrane-spanning segment. The Cytoplasmic segment spans residues 47–463 (KRMYDRAISA…LSEPEVLLQT (417 aa)). Residues 49–195 (MYDRAISAPT…LSGSLYDDLQ (147 aa)) form a dimerization region. A phosphoserine mark is found at Ser55, Ser59, Ser79, and Ser94. The disordered stretch occupies residues 57–77 (PTSPTRLSHSGKRSWEEPNWM). Residues 96-123 (QTLPTDSSTFDTDTFCPPRPKPVARKGQ) are disordered. The span at 100–110 (TDSSTFDTDTF) shows a compositional bias: low complexity. Residues 160 to 169 (AAVDICAELR) form an important for interaction with DNM1L region. 3 residues coordinate ADP: Ser187, Ser189, and His201. The tract at residues 234 to 242 (RRENPEYFP) is important for interaction with DNM1L. ADP contacts are provided by Ser340, Arg342, and Lys368.

Belongs to the SMCR7 family. Homodimer. Interacts with DNM1L. Expression is relatively high in heart, skeletal muscle, pancreas and kidney.

It is found in the mitochondrion outer membrane. In terms of biological role, mitochondrial outer membrane protein which regulates mitochondrial fission/fusion dynamics. Promotes the recruitment and association of the fission mediator dynamin-related protein 1 (DNM1L) to the mitochondrial surface independently of the mitochondrial fission FIS1 and MFF proteins. Regulates DNM1L GTPase activity and DNM1L oligomerization. Binds ADP and can also bind GDP, although with lower affinity. Does not bind CDP, UDP, ATP, AMP or GTP. Inhibits DNM1L GTPase activity in the absence of bound ADP. Requires ADP to stimulate DNM1L GTPase activity and the assembly of DNM1L into long, oligomeric tubules with a spiral pattern, as opposed to the ring-like DNM1L oligomers observed in the absence of bound ADP. Does not require ADP for its function in recruiting DNM1L. This is Mitochondrial dynamics protein MIEF1 from Homo sapiens (Human).